We begin with the raw amino-acid sequence, 896 residues long: Valine--tRNA ligase (896 aa).

The 'HIGH' region signature appears at 48–58 (PNVTGSLHMGH). A 'KMSKS' region motif is present at residues 543–547 (KMSKS). Lys-546 contributes to the ATP binding site. Residues 830–896 (VIDLDAERTR…ARLGAALERL (67 aa)) are a coiled coil.

Belongs to the class-I aminoacyl-tRNA synthetase family. ValS type 1 subfamily. Monomer.

The protein resides in the cytoplasm. It catalyses the reaction tRNA(Val) + L-valine + ATP = L-valyl-tRNA(Val) + AMP + diphosphate. Functionally, catalyzes the attachment of valine to tRNA(Val). As ValRS can inadvertently accommodate and process structurally similar amino acids such as threonine, to avoid such errors, it has a 'posttransfer' editing activity that hydrolyzes mischarged Thr-tRNA(Val) in a tRNA-dependent manner. The sequence is that of Valine--tRNA ligase from Granulibacter bethesdensis (strain ATCC BAA-1260 / CGDNIH1).